A 443-amino-acid polypeptide reads, in one-letter code: Probable glycine dehydrogenase (decarboxylating) subunit 1 (443 aa).

It belongs to the GcvP family. N-terminal subunit subfamily. In terms of assembly, the glycine cleavage system is composed of four proteins: P, T, L and H. In this organism, the P 'protein' is a heterodimer of two subunits.

The enzyme catalyses N(6)-[(R)-lipoyl]-L-lysyl-[glycine-cleavage complex H protein] + glycine + H(+) = N(6)-[(R)-S(8)-aminomethyldihydrolipoyl]-L-lysyl-[glycine-cleavage complex H protein] + CO2. Functionally, the glycine cleavage system catalyzes the degradation of glycine. The P protein binds the alpha-amino group of glycine through its pyridoxal phosphate cofactor; CO(2) is released and the remaining methylamine moiety is then transferred to the lipoamide cofactor of the H protein. This Nitratidesulfovibrio vulgaris (strain DSM 19637 / Miyazaki F) (Desulfovibrio vulgaris) protein is Probable glycine dehydrogenase (decarboxylating) subunit 1.